We begin with the raw amino-acid sequence, 196 residues long: Calmodulin-like protein 4 (196 aa).

The segment at methionine 1–arginine 43 is disordered. Basic and acidic residues predominate over residues phenylalanine 17–glutamate 27. The span at glycine 29–serine 39 shows a compositional bias: polar residues. 4 consecutive EF-hand domains span residues aspartate 51–serine 86, proline 87–glutamine 122, aspartate 124–lysine 159, and leucine 160–aspartate 195.

Belongs to the calmodulin family. In terms of assembly, interacts with MYO7B; the interaction mediates the association of CALML4 with the IMAC/intermicrovillar adhesion complex. Interacts with MYO7A. Expressed in the intestinal tract. In terms of tissue distribution, dominant transcript in the intestinal tract.

It localises to the cell projection. The protein localises to the microvillus. Its function is as follows. As part of the intermicrovillar adhesion complex/IMAC plays a role in epithelial brush border differentiation, controlling microvilli organization and length. Acts as a light chain for MYO7B and is required for efficient targeting of the IMAC to the tips of border brush microvilli. The chain is Calmodulin-like protein 4 from Homo sapiens (Human).